The following is a 567-amino-acid chain: DNA ligase B (567 aa).

The active-site N6-AMP-lysine intermediate is Lys132.

Belongs to the NAD-dependent DNA ligase family. LigB subfamily.

It catalyses the reaction NAD(+) + (deoxyribonucleotide)n-3'-hydroxyl + 5'-phospho-(deoxyribonucleotide)m = (deoxyribonucleotide)n+m + AMP + beta-nicotinamide D-nucleotide.. In terms of biological role, catalyzes the formation of phosphodiester linkages between 5'-phosphoryl and 3'-hydroxyl groups in double-stranded DNA using NAD as a coenzyme and as the energy source for the reaction. This chain is DNA ligase B, found in Yersinia pestis.